Consider the following 252-residue polypeptide: Protein HEAT-INDUCED TAS1 TARGET 2 (252 aa).

It belongs to the heat induced plant HTT protein family. As to expression, expressed ubiquitously, including in seedlings, leaves, stems, inflorescences and siliques.

It localises to the cytoplasm. The protein resides in the nucleus. Its function is as follows. Mediates both basal and acquired thermotolerance via HSFA1s-directed pathways (e.g. HSFA1A, HSFA1B, and HSFA1D). Triggers the expression of HSFA1A and HSFA1B. In Arabidopsis thaliana (Mouse-ear cress), this protein is Protein HEAT-INDUCED TAS1 TARGET 2.